The following is a 552-amino-acid chain: Dihydroxy-acid dehydratase (552 aa).

Mg(2+) is bound at residue Asp78. Cys119 contacts [2Fe-2S] cluster. Mg(2+) contacts are provided by Asp120 and Lys121. Lys121 carries the post-translational modification N6-carboxylysine. [2Fe-2S] cluster is bound at residue Cys191. Glu442 is a binding site for Mg(2+). The active-site Proton acceptor is the Ser468.

This sequence belongs to the IlvD/Edd family. Homodimer. It depends on [2Fe-2S] cluster as a cofactor. Mg(2+) is required as a cofactor.

It catalyses the reaction (2R)-2,3-dihydroxy-3-methylbutanoate = 3-methyl-2-oxobutanoate + H2O. The catalysed reaction is (2R,3R)-2,3-dihydroxy-3-methylpentanoate = (S)-3-methyl-2-oxopentanoate + H2O. The protein operates within amino-acid biosynthesis; L-isoleucine biosynthesis; L-isoleucine from 2-oxobutanoate: step 3/4. Its pathway is amino-acid biosynthesis; L-valine biosynthesis; L-valine from pyruvate: step 3/4. In terms of biological role, functions in the biosynthesis of branched-chain amino acids. Catalyzes the dehydration of (2R,3R)-2,3-dihydroxy-3-methylpentanoate (2,3-dihydroxy-3-methylvalerate) into 2-oxo-3-methylpentanoate (2-oxo-3-methylvalerate) and of (2R)-2,3-dihydroxy-3-methylbutanoate (2,3-dihydroxyisovalerate) into 2-oxo-3-methylbutanoate (2-oxoisovalerate), the penultimate precursor to L-isoleucine and L-valine, respectively. The chain is Dihydroxy-acid dehydratase from Caldicellulosiruptor saccharolyticus (strain ATCC 43494 / DSM 8903 / Tp8T 6331).